The primary structure comprises 92 residues: C-C motif chemokine 5 (92 aa).

Residues methionine 1–alanine 23 form the signal peptide. Intrachain disulfides connect cysteine 33-cysteine 57 and cysteine 34-cysteine 73.

This sequence belongs to the intercrine beta (chemokine CC) family.

It is found in the secreted. In terms of biological role, chemoattractant for blood monocytes, memory T-helper cells and eosinophils. Causes the release of histamine from basophils and activates eosinophils. May activate several chemokine receptors including CCR1, CCR3, CCR4 and CCR5. May also be an agonist of the G protein-coupled receptor GPR75. Together with GPR75, may play a role in neuron survival through activation of a downstream signaling pathway involving the PI3, Akt and MAP kinases. By activating GPR75 may also play a role in insulin secretion by islet cells. The polypeptide is C-C motif chemokine 5 (CCL5) (Felis catus (Cat)).